Consider the following 246-residue polypeptide: 4-hydroxy-tetrahydrodipicolinate reductase (246 aa).

Residues 7 to 12, 84 to 86, and 108 to 111 contribute to the NAD(+) site; these read GATGRT, GTT, and ASNF. H140 (proton donor/acceptor) is an active-site residue. H141 is a binding site for (S)-2,3,4,5-tetrahydrodipicolinate. The Proton donor role is filled by K144. Position 150-151 (150-151) interacts with (S)-2,3,4,5-tetrahydrodipicolinate; that stretch reads GT.

The protein belongs to the DapB family.

The protein localises to the cytoplasm. It carries out the reaction (S)-2,3,4,5-tetrahydrodipicolinate + NAD(+) + H2O = (2S,4S)-4-hydroxy-2,3,4,5-tetrahydrodipicolinate + NADH + H(+). The catalysed reaction is (S)-2,3,4,5-tetrahydrodipicolinate + NADP(+) + H2O = (2S,4S)-4-hydroxy-2,3,4,5-tetrahydrodipicolinate + NADPH + H(+). It participates in amino-acid biosynthesis; L-lysine biosynthesis via DAP pathway; (S)-tetrahydrodipicolinate from L-aspartate: step 4/4. Functionally, catalyzes the conversion of 4-hydroxy-tetrahydrodipicolinate (HTPA) to tetrahydrodipicolinate. The polypeptide is 4-hydroxy-tetrahydrodipicolinate reductase (Natronomonas pharaonis (strain ATCC 35678 / DSM 2160 / CIP 103997 / JCM 8858 / NBRC 14720 / NCIMB 2260 / Gabara) (Halobacterium pharaonis)).